Here is a 264-residue protein sequence, read N- to C-terminus: Octanoyltransferase (264 aa).

The 189-residue stretch at 74–262 (GTASELVWLV…AFESVFGPRQ (189 aa)) folds into the BPL/LPL catalytic domain. Substrate-binding positions include 113-120 (RGGEYTYH), 193-195 (AIG), and 206-208 (GIA). Cys-224 acts as the Acyl-thioester intermediate in catalysis.

It belongs to the LipB family.

It localises to the cytoplasm. The catalysed reaction is octanoyl-[ACP] + L-lysyl-[protein] = N(6)-octanoyl-L-lysyl-[protein] + holo-[ACP] + H(+). It participates in protein modification; protein lipoylation via endogenous pathway; protein N(6)-(lipoyl)lysine from octanoyl-[acyl-carrier-protein]: step 1/2. In terms of biological role, catalyzes the transfer of endogenously produced octanoic acid from octanoyl-acyl-carrier-protein onto the lipoyl domains of lipoate-dependent enzymes. Lipoyl-ACP can also act as a substrate although octanoyl-ACP is likely to be the physiological substrate. In Brucella melitensis biotype 1 (strain ATCC 23456 / CCUG 17765 / NCTC 10094 / 16M), this protein is Octanoyltransferase.